The chain runs to 175 residues: 2-oxo-4-hydroxy-4-carboxy-5-ureidoimidazoline decarboxylase (175 aa).

The Proton donor role is filled by H67. Substrate-binding positions include P68, 84 to 88 (SRGEQ), and 119 to 123 (FVICA). A Microbody targeting signal motif is present at residues 173–175 (TKL).

It belongs to the OHCU decarboxylase family. Homodimer.

It localises to the peroxisome. It carries out the reaction 5-hydroxy-2-oxo-4-ureido-2,5-dihydro-1H-imidazole-5-carboxylate + H(+) = (S)-allantoin + CO2. The protein operates within purine metabolism; urate degradation; (S)-allantoin from urate: step 3/3. Catalyzes the stereoselective decarboxylation of 2-oxo-4-hydroxy-4-carboxy-5-ureidoimidazoline (OHCU) to (S)-allantoin. This is 2-oxo-4-hydroxy-4-carboxy-5-ureidoimidazoline decarboxylase (urad) from Amia calva (Bowfin).